The following is a 418-amino-acid chain: Serine/threonine transporter SstT (418 aa).

A run of 8 helical transmembrane segments spans residues 21 to 41 (ILIG…AAIA), 49 to 69 (FVGA…IASI), 83 to 103 (ILFL…VVSF), 142 to 162 (ALLN…GIAL), 190 to 210 (FAPL…GFGA), 217 to 237 (LLVV…PLIV), 299 to 319 (MAGA…TLGI), and 331 to 351 (VVAA…LLLI).

It belongs to the dicarboxylate/amino acid:cation symporter (DAACS) (TC 2.A.23) family.

It is found in the cell inner membrane. It carries out the reaction L-serine(in) + Na(+)(in) = L-serine(out) + Na(+)(out). The enzyme catalyses L-threonine(in) + Na(+)(in) = L-threonine(out) + Na(+)(out). Involved in the import of serine and threonine into the cell, with the concomitant import of sodium (symport system). The sequence is that of Serine/threonine transporter SstT from Yersinia pestis bv. Antiqua (strain Antiqua).